The chain runs to 341 residues: L-threonine 3-dehydrogenase (341 aa).

Cys38 is a binding site for Zn(2+). Residues Thr40 and His43 each act as charge relay system in the active site. 6 residues coordinate Zn(2+): His63, Glu64, Cys93, Cys96, Cys99, and Cys107. NAD(+) is bound by residues Ile175, Asp195, Arg200, 262–264 (LGI), and 286–287 (IY).

This sequence belongs to the zinc-containing alcohol dehydrogenase family. Homotetramer. The cofactor is Zn(2+).

It is found in the cytoplasm. It carries out the reaction L-threonine + NAD(+) = (2S)-2-amino-3-oxobutanoate + NADH + H(+). The protein operates within amino-acid degradation; L-threonine degradation via oxydo-reductase pathway; glycine from L-threonine: step 1/2. Functionally, catalyzes the NAD(+)-dependent oxidation of L-threonine to 2-amino-3-ketobutyrate. This is L-threonine 3-dehydrogenase from Marinomonas sp. (strain MWYL1).